A 78-amino-acid chain; its full sequence is Probable Vpr-like protein (78 aa).

Residues 35–43 (AIRLLQGLF) carry the Nuclear export signal motif. Residues 45–54 (RYRFKKPRVD) carry the Nuclear localization signal motif.

The protein localises to the virion. It localises to the host nucleus. Functionally, seems to function as a Vpr-like protein, since it mediates host cell cycle arrest in G2 phase. Cell cycle arrest creates a favorable environment for maximizing viral expression and production. The protein is Probable Vpr-like protein of Feline immunodeficiency virus (isolate Petaluma) (FIV).